Consider the following 561-residue polypeptide: MSNNPRSQVITQGTQRSPNRAMLRAVGFGDDDFTKPIVGIANGYSTITPCNMGINDLALRAEAGLRTAGAMPQLFGTITISDGISMGTEGMKYSLVSREVIADSIETVCNGQRMDGVLAIGGCDKNMPGAMIAMARLNIPSIFVYGGTIKPGHYAGEDLTVVSAFEAVGQYSAGKIDEETLYGIERNACPGAGSCGGMFTANTMSSAFEAMGMSLPYSSTMAAVDGEKADSTEESAKVLVEAIKKQILPSQILTRKAFENAIAVIMAVGGSTNAVLHLLAIANTIGVPLSLDDFETIRHKVPVLCDLKPSGKYVTTNLHAAGGIPQVMKILLVNGILHGDALTITGQTIAEVLADIPDQPPAGQDVIHSWDDPVYQEGHLAVLKGNLATEGSVAKISGVKKPVITGPAKVFESEEDCLEAILAGKIQAGDVVVVRYEGPKGGPGMREMLAPTSAIIGAGLGDSVGLITDGRFSGGTYGLVVGHVAPEAYVGGAIALVQEGDQITIDAGKRLLQLNISEEELAQRRAQWTPPQPRYPRGILAKYAKLVSSSSLGAVTDIDLF.

Cysteine 50 serves as a coordination point for [2Fe-2S] cluster. Aspartate 82 lines the Mg(2+) pocket. Cysteine 123 contacts [2Fe-2S] cluster. Aspartate 124 and lysine 125 together coordinate Mg(2+). An N6-carboxylysine modification is found at lysine 125. Cysteine 195 is a [2Fe-2S] cluster binding site. Glutamate 447 contributes to the Mg(2+) binding site. Serine 473 (proton acceptor) is an active-site residue.

This sequence belongs to the IlvD/Edd family. Homodimer. The cofactor is [2Fe-2S] cluster. It depends on Mg(2+) as a cofactor.

It carries out the reaction (2R)-2,3-dihydroxy-3-methylbutanoate = 3-methyl-2-oxobutanoate + H2O. The catalysed reaction is (2R,3R)-2,3-dihydroxy-3-methylpentanoate = (S)-3-methyl-2-oxopentanoate + H2O. It participates in amino-acid biosynthesis; L-isoleucine biosynthesis; L-isoleucine from 2-oxobutanoate: step 3/4. The protein operates within amino-acid biosynthesis; L-valine biosynthesis; L-valine from pyruvate: step 3/4. Its function is as follows. Functions in the biosynthesis of branched-chain amino acids. Catalyzes the dehydration of (2R,3R)-2,3-dihydroxy-3-methylpentanoate (2,3-dihydroxy-3-methylvalerate) into 2-oxo-3-methylpentanoate (2-oxo-3-methylvalerate) and of (2R)-2,3-dihydroxy-3-methylbutanoate (2,3-dihydroxyisovalerate) into 2-oxo-3-methylbutanoate (2-oxoisovalerate), the penultimate precursor to L-isoleucine and L-valine, respectively. The protein is Dihydroxy-acid dehydratase of Synechocystis sp. (strain ATCC 27184 / PCC 6803 / Kazusa).